Reading from the N-terminus, the 174-residue chain is Gamma-crystallin M3 (174 aa).

2 Beta/gamma crystallin 'Greek key' domains span residues 2–40 (GKII…RVES) and 41–82 (GCFV…RMVP). The segment at 83–87 (QYRGP) is connecting peptide. Beta/gamma crystallin 'Greek key' domains lie at 88 to 128 (YRMR…HVMD) and 129 to 171 (GHWL…RRIM).

It belongs to the beta/gamma-crystallin family. In terms of assembly, monomer.

Crystallins are the dominant structural components of the vertebrate eye lens. The protein is Gamma-crystallin M3 of Cyprinus carpio (Common carp).